The sequence spans 285 residues: K88 fimbrial protein AD (285 aa).

The first 21 residues, 1 to 21 (MKKTLIALAIAASAASGMAHA), serve as a signal peptide directing secretion.

The protein belongs to the fimbrial K88 protein family. As to quaternary structure, K88 fimbria, 0.1-1 micrometer in length and 7 nanometers in diameter, is composed of about 100 identical subunits.

The protein localises to the fimbrium. K88 major fimbrial subunit. Fimbriae (also called pili), are polar filaments radiating from the surface of the bacterium to a length of 0.5-1.5 micrometers and numbering 100-300 per cell. They enable bacteria to colonize the epithelium of specific host organs. The protein is K88 fimbrial protein AD (faeG) of Escherichia coli.